The chain runs to 503 residues: uncharacterized protein (503 aa).

Belongs to the Mg-chelatase subunits D/I family. ComM subfamily.

This is an uncharacterized protein from Mycobacterium bovis (strain ATCC BAA-935 / AF2122/97).